Reading from the N-terminus, the 890-residue chain is Calcium-transporting ATPase (890 aa).

The Cytoplasmic segment spans residues 1-47; that stretch reads MKFHEMGQTDLLEATNTSMKQGLTEKEVKKRLDKHGPNELQEGKKTS. A helical membrane pass occupies residues 48 to 68; the sequence is ALLLFFAQFKDFMVLVLLAAT. Over 69–78 the chain is Extracellular; sequence LISGFLGEYV. The helical transmembrane segment at 79–99 threads the bilayer; it reads DAVAIIAIVFVNGILGFFQER. Residues 100–238 are Cytoplasmic-facing; the sequence is RAEQSLQALK…TLSTPLQRRL (139 aa). The helical transmembrane segment at 239-258 threads the bilayer; the sequence is EQLGKILIVVALLLTVLVVA. At 259-270 the chain is on the extracellular side; the sequence is VGVIQGHDLYSM. The chain crosses the membrane as a helical span at residues 271-288; it reads FLAGVSLAVAAIPEGLPA. The Ca(2+) site is built by valine 279, alanine 280, isoleucine 282, and glutamate 284. Residues 289–688 lie on the Cytoplasmic side of the membrane; it reads IVTVALSLGV…KEGRNIYENI (400 aa). Residue aspartate 326 is the 4-aspartylphosphate intermediate of the active site. The Mg(2+) site is built by aspartate 633 and aspartate 637. Residues 689 to 708 traverse the membrane as a helical segment; it reads RKFIRYLLASNVGEILVMLF. Positions 699 and 702 each coordinate Ca(2+). Residues 709–718 are Extracellular-facing; that stretch reads AMLLALPLPL. Residues 719-739 form a helical membrane-spanning segment; that stretch reads VPIQILWVNLVTDGLPAMALG. Residues asparagine 727, threonine 730, and aspartate 731 each contribute to the Ca(2+) site. The Cytoplasmic segment spans residues 740–759; it reads MDQPEGDVMKRKPRHPKEGV. A helical transmembrane segment spans residues 760–782; sequence FARKLGWKVVSRGFLIGVATILA. The Extracellular segment spans residues 783–798; the sequence is FIIVYHRNPENLAYAQ. A helical membrane pass occupies residues 799–818; that stretch reads TIAFATLVLAQLIHVFDCRS. Residues 819-830 are Cytoplasmic-facing; sequence ETSVFSRNPFQN. Residues 831-849 form a helical membrane-spanning segment; the sequence is LYLIGAVLSSILLMLVVIY. At 850 to 864 the chain is on the extracellular side; it reads YPPLQPIFHTVAITP. A helical transmembrane segment spans residues 865–885; sequence GDWMLVIGMSAIPTFLLAGSL. At 886 to 890 the chain is on the cytoplasmic side; it reads LTRKK.

Belongs to the cation transport ATPase (P-type) (TC 3.A.3) family. Type IIA subfamily. Phosphorylated in a Ca(2+)-dependent manner starting 4 hours after shifting to sporulation medium.

Its subcellular location is the cell membrane. It carries out the reaction Ca(2+)(in) + ATP + H2O = Ca(2+)(out) + ADP + phosphate + H(+). Its function is as follows. This magnesium-dependent enzyme catalyzes the hydrolysis of ATP coupled with the transport of calcium. In Bacillus subtilis (strain 168), this protein is Calcium-transporting ATPase (yloB).